Here is a 303-residue protein sequence, read N- to C-terminus: Movement protein (303 aa).

Belongs to the tobamovirus movement protein family.

It is found in the host cytoplasm. Its subcellular location is the host cytoskeleton. It localises to the host cell junction. The protein resides in the host plasmodesma. In terms of biological role, transports viral genome to neighboring plant cells directly through plasmosdesmata, without any budding. The movement protein allows efficient cell to cell propagation, by bypassing the host cell wall barrier. Forms a ribonucleoprotein complex with viral RNA. Binds microtubules and modulates microtubule stability. Can bind double-stranded DNA. This Cymbidium (ORSV) protein is Movement protein (MP).